Here is a 187-residue protein sequence, read N- to C-terminus: Small ribosomal subunit protein uS5 (187 aa).

The interval Met1 to Pro20 is disordered. Positions Phe22–Val85 constitute an S5 DRBM domain.

Belongs to the universal ribosomal protein uS5 family. As to quaternary structure, part of the 30S ribosomal subunit. Contacts proteins S4 and S8.

Its function is as follows. With S4 and S12 plays an important role in translational accuracy. Located at the back of the 30S subunit body where it stabilizes the conformation of the head with respect to the body. This chain is Small ribosomal subunit protein uS5, found in Cereibacter sphaeroides (strain ATCC 17029 / ATH 2.4.9) (Rhodobacter sphaeroides).